A 38-amino-acid chain; its full sequence is MTPSLANFLWSLVAGAVVLGALFGAIIFVSQRDKVRRR.

The helical transmembrane segment at 8–28 threads the bilayer; sequence FLWSLVAGAVVLGALFGAIIF.

The protein belongs to the PsbX family. Type 1 subfamily. PSII is composed of 1 copy each of membrane proteins PsbA, PsbB, PsbC, PsbD, PsbE, PsbF, PsbH, PsbI, PsbJ, PsbK, PsbL, PsbM, PsbT, PsbX, PsbY, PsbZ, Psb30/Ycf12, peripheral proteins PsbO, CyanoQ (PsbQ), PsbU, PsbV and a large number of cofactors. It forms dimeric complexes.

It is found in the cellular thylakoid membrane. Its function is as follows. Involved in the binding and/or turnover of quinones at the Q(B) site of photosystem II (PSII). PSII is a light-driven water plastoquinone oxidoreductase, using light energy to abstract electrons from H(2)O, generating a proton gradient subsequently used for ATP formation. The protein is Photosystem II reaction center protein X of Synechococcus sp. (strain JA-2-3B'a(2-13)) (Cyanobacteria bacterium Yellowstone B-Prime).